A 430-amino-acid chain; its full sequence is 3-phosphoshikimate 1-carboxyvinyltransferase (430 aa).

Positions 20, 21, and 25 each coordinate 3-phosphoshikimate. Lys-20 is a binding site for phosphoenolpyruvate. Phosphoenolpyruvate-binding residues include Gly-92 and Arg-120. Ser-166, Gln-168, Asp-312, and Lys-339 together coordinate 3-phosphoshikimate. Gln-168 is a binding site for phosphoenolpyruvate. The active-site Proton acceptor is Asp-312. Phosphoenolpyruvate contacts are provided by Arg-343 and Arg-387.

Belongs to the EPSP synthase family. Monomer.

It is found in the cytoplasm. It catalyses the reaction 3-phosphoshikimate + phosphoenolpyruvate = 5-O-(1-carboxyvinyl)-3-phosphoshikimate + phosphate. It functions in the pathway metabolic intermediate biosynthesis; chorismate biosynthesis; chorismate from D-erythrose 4-phosphate and phosphoenolpyruvate: step 6/7. Catalyzes the transfer of the enolpyruvyl moiety of phosphoenolpyruvate (PEP) to the 5-hydroxyl of shikimate-3-phosphate (S3P) to produce enolpyruvyl shikimate-3-phosphate and inorganic phosphate. This chain is 3-phosphoshikimate 1-carboxyvinyltransferase, found in Lactococcus lactis subsp. cremoris (strain SK11).